The sequence spans 147 residues: PTPN13-like protein, Y-linked (147 aa).

In terms of tissue distribution, expressed in testis. Detected in spermatocytes, spermatids and spermatozoa (at protein level).

This is PTPN13-like protein, Y-linked (PRY) from Homo sapiens (Human).